A 244-amino-acid chain; its full sequence is 5'-deoxynucleotidase (244 aa).

The catalysed reaction is a 2'-deoxyribonucleoside 5'-phosphate + H2O = a 2'-deoxyribonucleoside + phosphate. Following host DNA degradation, is responsible for the degradation of 5'-dNMP's to deoxynucleosides that can be further excreted. Active on deoxynucleoside 5'-monophosphates but not active as a phosphatase on ribonucleotides, deoxynucleoside 5'-triphosphates, deoxynucleoside 3'-monophosphates, or deoxyoligonucleotides. This is 5'-deoxynucleotidase (dmp) from Escherichia coli (Enterobacteria phage T5).